We begin with the raw amino-acid sequence, 202 residues long: Precorrin-2 dehydrogenase (202 aa).

Residues 20 to 21 and 41 to 42 contribute to the NAD(+) site; these read TI and PT.

Belongs to the precorrin-2 dehydrogenase / sirohydrochlorin ferrochelatase family. In terms of assembly, homodimer.

The enzyme catalyses precorrin-2 + NAD(+) = sirohydrochlorin + NADH + 2 H(+). It participates in cofactor biosynthesis; adenosylcobalamin biosynthesis; sirohydrochlorin from precorrin-2: step 1/1. Its pathway is porphyrin-containing compound metabolism; siroheme biosynthesis; sirohydrochlorin from precorrin-2: step 1/1. In terms of biological role, catalyzes the dehydrogenation of precorrin-2 to form sirohydrochlorin which is used as a precursor in both siroheme biosynthesis and in the anaerobic branch of adenosylcobalamin biosynthesis. It is unable to oxidize precorrin-3. This is Precorrin-2 dehydrogenase (sirC) from Priestia megaterium (Bacillus megaterium).